The primary structure comprises 367 residues: Flagellar P-ring protein (367 aa).

Residues 1-21 form the signal peptide; the sequence is MYVFKALAGIVLALVATLAHA.

Belongs to the FlgI family. The basal body constitutes a major portion of the flagellar organelle and consists of four rings (L,P,S, and M) mounted on a central rod.

The protein resides in the periplasm. It is found in the bacterial flagellum basal body. In terms of biological role, assembles around the rod to form the L-ring and probably protects the motor/basal body from shearing forces during rotation. The chain is Flagellar P-ring protein from Salmonella arizonae (strain ATCC BAA-731 / CDC346-86 / RSK2980).